A 683-amino-acid polypeptide reads, in one-letter code: Methionine--tRNA ligase (683 aa).

Residues 23 to 33 carry the 'HIGH' region motif; that stretch reads PYANGSAHIGH. The Zn(2+) site is built by C154, C157, C166, and C170. The short motif at 335–339 is the 'KMSKS' region element; it reads KFSKS. ATP is bound at residue K338. Residues 583-683 enclose the tRNA-binding domain; that stretch reads DFAKMELRVG…KPSEPGTKVR (101 aa).

Belongs to the class-I aminoacyl-tRNA synthetase family. MetG type 1 subfamily. Homodimer. Requires Zn(2+) as cofactor.

Its subcellular location is the cytoplasm. It catalyses the reaction tRNA(Met) + L-methionine + ATP = L-methionyl-tRNA(Met) + AMP + diphosphate. Its function is as follows. Is required not only for elongation of protein synthesis but also for the initiation of all mRNA translation through initiator tRNA(fMet) aminoacylation. The protein is Methionine--tRNA ligase of Methanocella arvoryzae (strain DSM 22066 / NBRC 105507 / MRE50).